The primary structure comprises 281 residues: Glutamate racemase (281 aa).

Substrate-binding positions include 13–14 (DS) and 45–46 (YG). Cys76 acts as the Proton donor/acceptor in catalysis. 77–78 (NT) lines the substrate pocket. The active-site Proton donor/acceptor is the Cys185. Position 186-187 (186-187 (TH)) interacts with substrate.

The protein belongs to the aspartate/glutamate racemases family.

It carries out the reaction L-glutamate = D-glutamate. It functions in the pathway cell wall biogenesis; peptidoglycan biosynthesis. Provides the (R)-glutamate required for cell wall biosynthesis. In Rippkaea orientalis (strain PCC 8801 / RF-1) (Cyanothece sp. (strain PCC 8801)), this protein is Glutamate racemase.